The chain runs to 318 residues: D-alanine--D-alanine ligase B (318 aa).

The ATP-grasp domain occupies 116–311 (KQVWQSLGIP…FQQLVLAILA (196 aa)). ATP is bound at residue 142–197 (STELGFPLIVKPAHEGSSIGMAKVNSTQELVAAWQDAAKYDSQVLVEQWIHGPEFT). The Mg(2+) site is built by Asp-265, Glu-278, and Asn-280.

The protein belongs to the D-alanine--D-alanine ligase family. The cofactor is Mg(2+). Mn(2+) is required as a cofactor.

It is found in the cytoplasm. The catalysed reaction is 2 D-alanine + ATP = D-alanyl-D-alanine + ADP + phosphate + H(+). The protein operates within cell wall biogenesis; peptidoglycan biosynthesis. In terms of biological role, cell wall formation. This chain is D-alanine--D-alanine ligase B, found in Pseudomonas putida (strain ATCC 47054 / DSM 6125 / CFBP 8728 / NCIMB 11950 / KT2440).